Reading from the N-terminus, the 453-residue chain is Chromosomal replication initiator protein DnaA (453 aa).

The tract at residues 1–75 (MSENMEELWS…SLKKISGKQL (75 aa)) is domain I, interacts with DnaA modulators. Positions 75 to 114 (LKIKFLLPGEKIKMEEQNNENEEKPESTSKKSSQGSEHTT) are domain II. A compositionally biased stretch (basic and acidic residues) spans 87–103 (KMEEQNNENEEKPESTS). The segment at 87–112 (KMEEQNNENEEKPESTSKKSSQGSEH) is disordered. The domain III, AAA+ region stretch occupies residues 115–331 (WLNPKYTFDT…GGLIRVIAYS (217 aa)). ATP-binding residues include Gly-159, Gly-161, Lys-162, and Thr-163. Positions 332 to 453 (SMANKKITKE…DEIKNLLHGD (122 aa)) are domain IV, binds dsDNA.

This sequence belongs to the DnaA family. In terms of assembly, oligomerizes as a right-handed, spiral filament on DNA at oriC.

The protein localises to the cytoplasm. In terms of biological role, plays an essential role in the initiation and regulation of chromosomal replication. ATP-DnaA binds to the origin of replication (oriC) to initiate formation of the DNA replication initiation complex once per cell cycle. Binds the DnaA box (a 9 base pair repeat at the origin) and separates the double-stranded (ds)DNA. Forms a right-handed helical filament on oriC DNA; dsDNA binds to the exterior of the filament while single-stranded (ss)DNA is stabiized in the filament's interior. The ATP-DnaA-oriC complex binds and stabilizes one strand of the AT-rich DNA unwinding element (DUE), permitting loading of DNA polymerase. After initiation quickly degrades to an ADP-DnaA complex that is not apt for DNA replication. Binds acidic phospholipids. The polypeptide is Chromosomal replication initiator protein DnaA (Natranaerobius thermophilus (strain ATCC BAA-1301 / DSM 18059 / JW/NM-WN-LF)).